Consider the following 264-residue polypeptide: 5'-nucleotidase SurE (264 aa).

Residues Asp10, Asp11, Ser43, and Asn99 each contribute to the a divalent metal cation site.

It belongs to the SurE nucleotidase family. The cofactor is a divalent metal cation.

Its subcellular location is the cytoplasm. The enzyme catalyses a ribonucleoside 5'-phosphate + H2O = a ribonucleoside + phosphate. Functionally, nucleotidase that shows phosphatase activity on nucleoside 5'-monophosphates. This is 5'-nucleotidase SurE from Methanococcus maripaludis (strain C5 / ATCC BAA-1333).